The chain runs to 203 residues: Small ribosomal subunit protein uS4 (203 aa).

Residues 93 to 156 (RRLDNVVYRL…LKVPAILEAV (64 aa)) enclose the S4 RNA-binding domain.

The protein belongs to the universal ribosomal protein uS4 family. In terms of assembly, part of the 30S ribosomal subunit. Contacts protein S5. The interaction surface between S4 and S5 is involved in control of translational fidelity.

In terms of biological role, one of the primary rRNA binding proteins, it binds directly to 16S rRNA where it nucleates assembly of the body of the 30S subunit. Its function is as follows. With S5 and S12 plays an important role in translational accuracy. The polypeptide is Small ribosomal subunit protein uS4 (Streptococcus sanguinis (strain SK36)).